Here is a 301-residue protein sequence, read N- to C-terminus: Diaminopimelate epimerase (301 aa).

Positions 15, 47, and 67 each coordinate substrate. The active-site Proton donor is the cysteine 76. Substrate contacts are provided by residues 77–78 (GN), asparagine 163, asparagine 197, and 215–216 (ER). Residue cysteine 224 is the Proton acceptor of the active site. 225-226 (GS) contributes to the substrate binding site.

This sequence belongs to the diaminopimelate epimerase family. As to quaternary structure, homodimer.

It localises to the cytoplasm. The enzyme catalyses (2S,6S)-2,6-diaminopimelate = meso-2,6-diaminopimelate. It participates in amino-acid biosynthesis; L-lysine biosynthesis via DAP pathway; DL-2,6-diaminopimelate from LL-2,6-diaminopimelate: step 1/1. Its function is as follows. Catalyzes the stereoinversion of LL-2,6-diaminopimelate (L,L-DAP) to meso-diaminopimelate (meso-DAP), a precursor of L-lysine and an essential component of the bacterial peptidoglycan. The protein is Diaminopimelate epimerase of Rhizobium meliloti (strain 1021) (Ensifer meliloti).